A 358-amino-acid polypeptide reads, in one-letter code: NADH-quinone oxidoreductase subunit H (358 aa).

The next 8 membrane-spanning stretches (helical) occupy residues 30 to 50, 96 to 116, 129 to 149, 165 to 185, 201 to 221, 264 to 284, 297 to 317, and 336 to 356; these read IVIGVCIMLAYAVIAIIMIFM, FLYNLAPYIVILASIMAFSCL, VGIFFLLAASSIGVVGILLAG, GAQMISYELSVGLSILTIVIL, GWFLFKGHIPALIAFIIYLIA, LFIIAAVATTIFLGGWMPLHI, IPGFIWFFGKSFFVVWLLMWI, and YLVPIGLCNLLLMVIIVVFKL.

This sequence belongs to the complex I subunit 1 family. NDH-1 is composed of 14 different subunits. Subunits NuoA, H, J, K, L, M, N constitute the membrane sector of the complex.

It is found in the cell inner membrane. The enzyme catalyses a quinone + NADH + 5 H(+)(in) = a quinol + NAD(+) + 4 H(+)(out). Its function is as follows. NDH-1 shuttles electrons from NADH, via FMN and iron-sulfur (Fe-S) centers, to quinones in the respiratory chain. The immediate electron acceptor for the enzyme in this species is believed to be ubiquinone. Couples the redox reaction to proton translocation (for every two electrons transferred, four hydrogen ions are translocated across the cytoplasmic membrane), and thus conserves the redox energy in a proton gradient. This subunit may bind ubiquinone. The protein is NADH-quinone oxidoreductase subunit H of Phocaeicola vulgatus (strain ATCC 8482 / DSM 1447 / JCM 5826 / CCUG 4940 / NBRC 14291 / NCTC 11154) (Bacteroides vulgatus).